Here is a 463-residue protein sequence, read N- to C-terminus: ATP-dependent protease ATPase subunit HslU (463 aa).

Residues Val-21, 63–68 (GVGKTE), Asp-276, Glu-341, and Arg-413 each bind ATP.

This sequence belongs to the ClpX chaperone family. HslU subfamily. As to quaternary structure, a double ring-shaped homohexamer of HslV is capped on each side by a ring-shaped HslU homohexamer. The assembly of the HslU/HslV complex is dependent on binding of ATP.

It is found in the cytoplasm. Its function is as follows. ATPase subunit of a proteasome-like degradation complex; this subunit has chaperone activity. The binding of ATP and its subsequent hydrolysis by HslU are essential for unfolding of protein substrates subsequently hydrolyzed by HslV. HslU recognizes the N-terminal part of its protein substrates and unfolds these before they are guided to HslV for hydrolysis. The sequence is that of ATP-dependent protease ATPase subunit HslU from Thermotoga petrophila (strain ATCC BAA-488 / DSM 13995 / JCM 10881 / RKU-1).